The following is a 281-amino-acid chain: Kinetochore-associated protein NSL1 homolog (281 aa).

Residue S4 is modified to Phosphoserine. Position 244 is a phosphothreonine (T244).

Component of the MIS12 complex composed of MIS12, DSN1, NSL1/DC8 and PMF1. Interacts with KNL1.

It localises to the nucleus. The protein resides in the chromosome. Its subcellular location is the centromere. The protein localises to the kinetochore. Functionally, part of the MIS12 complex which is required for normal chromosome alignment and segregation and kinetochore formation during mitosis. The sequence is that of Kinetochore-associated protein NSL1 homolog (NSL1) from Homo sapiens (Human).